The primary structure comprises 149 residues: UPF0260 protein PSPTO_3918 (149 aa).

It belongs to the UPF0260 family.

The sequence is that of UPF0260 protein PSPTO_3918 from Pseudomonas syringae pv. tomato (strain ATCC BAA-871 / DC3000).